The sequence spans 1020 residues: Calcium-transporting ATPase 10, plasma membrane-type (1020 aa).

Residues 1-175 (MESYLEENFG…FVWEALQDTT (175 aa)) are Cytoplasmic-facing. Residues 21-32 (ALRRWRKLCGVV) are interaction with calmodulin. The next 2 membrane-spanning stretches (helical) occupy residues 176–196 (LIIL…MEGW) and 199–219 (GAHD…VTAT). The Cytoplasmic portion of the chain corresponds to 220–263 (SDYRQSLQFKDLDKEKKKIQVQVTRNGFRQRLSIYDLLPGDVVH). A run of 2 helical transmembrane segments spans residues 264 to 284 (LAIG…SLLI) and 352 to 372 (GVAT…FIVL). The Cytoplasmic segment spans residues 373 to 400 (SQGLISKKYHEGLLLSWSGDDALEMLEH). The chain crosses the membrane as a helical span at residues 401–421 (FAIAVTIVVVAVPEGLPLAVT). Asp-456 serves as the catalytic 4-aspartylphosphate intermediate. 2 residues coordinate Mg(2+): Asp-758 and Asp-762. A helical membrane pass occupies residues 843-863 (LTAVQLLWVNMIMDTLGALAL). Residues 864–887 (ATEPPNDDLMKREPVGRTGKFITN) lie on the Cytoplasmic side of the membrane. Helical transmembrane passes span 888-907 (VMWR…MWYL) and 924-944 (VVLN…NEIS). Over 945–961 (SREMEKINVLRGILKNY) the chain is Cytoplasmic. 2 consecutive transmembrane segments (helical) span residues 962–982 (VFLG…QFLG) and 995–1015 (WIAS…IKLL). The Cytoplasmic portion of the chain corresponds to 1016–1020 (PVGSS).

Belongs to the cation transport ATPase (P-type) (TC 3.A.3) family. Type IIB subfamily.

Its subcellular location is the membrane. The catalysed reaction is Ca(2+)(in) + ATP + H2O = Ca(2+)(out) + ADP + phosphate + H(+). With respect to regulation, activated by calmodulin. Its function is as follows. This magnesium-dependent enzyme catalyzes the hydrolysis of ATP coupled with the translocation of calcium from the cytosol out of the cell, into the endoplasmic reticulum, or into organelles. The protein is Calcium-transporting ATPase 10, plasma membrane-type of Oryza sativa subsp. japonica (Rice).